Consider the following 338-residue polypeptide: Nodulation outer protein L (338 aa).

The segment covering Met1 to Gln14 has biased composition (polar residues). Disordered stretches follow at residues Met1–Val48, Thr85–Thr158, Ser187–Arg209, and Pro230–Gly259. The span at Thr85 to Pro97 shows a compositional bias: basic and acidic residues. Positions Val126 to Leu138 are enriched in polar residues. The segment covering Ser242–Ala258 has biased composition (polar residues).

It is found in the secreted. In terms of biological role, putative symbiotic effector that modulates nodulation in legumes. When delivered into the plant cell, modulates the activity of signal transduction pathways that culminate in activation of PR proteins. This is Nodulation outer protein L (nopL) from Sinorhizobium fredii (strain NBRC 101917 / NGR234).